A 152-amino-acid chain; its full sequence is Endoribonuclease YbeY (152 aa).

3 residues coordinate Zn(2+): His113, His117, and His123.

The protein belongs to the endoribonuclease YbeY family. Requires Zn(2+) as cofactor.

The protein localises to the cytoplasm. Functionally, single strand-specific metallo-endoribonuclease involved in late-stage 70S ribosome quality control and in maturation of the 3' terminus of the 16S rRNA. This is Endoribonuclease YbeY from Acidovorax ebreus (strain TPSY) (Diaphorobacter sp. (strain TPSY)).